A 143-amino-acid chain; its full sequence is MLQPKRTKFRKAHKGRIHGNAPGGATLNFGAYGLKAMEPDRITARQIEAARRAITRHIRRQGRLWIRIFPDVPVSSKPAEVRMGSGKGSPEFWVARVKPGRILFELDGVPGPIARVAFERAAAKLPIKVKVVARLGETIYEEA.

Residues 1 to 17 (MLQPKRTKFRKAHKGRI) are compositionally biased toward basic residues. The interval 1 to 20 (MLQPKRTKFRKAHKGRIHGN) is disordered.

This sequence belongs to the universal ribosomal protein uL16 family. In terms of assembly, part of the 50S ribosomal subunit.

Its function is as follows. Binds 23S rRNA and is also seen to make contacts with the A and possibly P site tRNAs. This Zymomonas mobilis subsp. mobilis (strain ATCC 31821 / ZM4 / CP4) protein is Large ribosomal subunit protein uL16.